The chain runs to 99 residues: A-type ATP synthase subunit F (99 aa).

It belongs to the V-ATPase F subunit family. In terms of assembly, has multiple subunits with at least A(3), B(3), C, D, E, F, H, I and proteolipid K(x).

Its subcellular location is the cell membrane. Functionally, component of the A-type ATP synthase that produces ATP from ADP in the presence of a proton gradient across the membrane. The sequence is that of A-type ATP synthase subunit F from Methanococcus aeolicus (strain ATCC BAA-1280 / DSM 17508 / OCM 812 / Nankai-3).